Reading from the N-terminus, the 219-residue chain is Protein-methionine-sulfoxide reductase heme-binding subunit MsrQ (219 aa).

The next 5 helical transmembrane spans lie at 17-37 (AKPL…YAAW), 88-108 (LFAY…DMGF), 121-141 (PFIL…ATSF), 153-173 (WQLL…HFFW), and 184-204 (VFVY…NHWA).

This sequence belongs to the MsrQ family. In terms of assembly, heterodimer of a catalytic subunit (MsrP) and a heme-binding subunit (MsrQ). It depends on FMN as a cofactor. Requires heme b as cofactor.

The protein localises to the cell inner membrane. Its function is as follows. Part of the MsrPQ system that repairs oxidized periplasmic proteins containing methionine sulfoxide residues (Met-O), using respiratory chain electrons. Thus protects these proteins from oxidative-stress damage caused by reactive species of oxygen and chlorine generated by the host defense mechanisms. MsrPQ is essential for the maintenance of envelope integrity under bleach stress, rescuing a wide series of structurally unrelated periplasmic proteins from methionine oxidation. MsrQ provides electrons for reduction to the reductase catalytic subunit MsrP, using the quinone pool of the respiratory chain. This chain is Protein-methionine-sulfoxide reductase heme-binding subunit MsrQ, found in Polaromonas naphthalenivorans (strain CJ2).